Here is a 541-residue protein sequence, read N- to C-terminus: 2-hydroxyacylsphingosine 1-beta-galactosyltransferase (541 aa).

An N-terminal signal peptide occupies residues 1–20; that stretch reads MKSYTPYFILLWSAVGIAKA. N-linked (GlcNAc...) asparagine glycosylation is found at Asn-78, Asn-333, and Asn-442. Residues 472 to 492 form a helical membrane-spanning segment; the sequence is YFLLDIAFVLLLGAALLYFLL.

The protein belongs to the UDP-glycosyltransferase family.

The protein localises to the membrane. Its subcellular location is the endoplasmic reticulum. The enzyme catalyses an N-acylsphing-4-enine + UDP-alpha-D-galactose = a beta-D-galactosyl-(1&lt;-&gt;1')-N-acylsphing-4-enine + UDP + H(+). The catalysed reaction is an N-acyl-sphingoid base + UDP-alpha-D-galactose = a D-galactosylceramide + UDP + H(+). It carries out the reaction N-(2-hydroxy-hexanoyl)-sphing-4-enine + UDP-alpha-D-galactose = N-(2-hydroxy-hexanoyl)-beta-D-galactosyl-sphing-4-enine + UDP + H(+). It catalyses the reaction N-(2-hydroxy-hexanoyl)-sphinganine + UDP-alpha-D-galactose = N-(2-hydroxyhexanoyl)-beta-D-galactosylsphinganine + UDP + H(+). The protein operates within sphingolipid metabolism; galactosylceramide biosynthesis. Functionally, catalyzes the transfer of galactose to ceramide, a key enzymatic step in the biosynthesis of galactocerebrosides, which are abundant sphingolipids of the myelin membrane of the central nervous system and peripheral nervous system. Galactosylates both hydroxy- and non-hydroxy fatty acid-containing ceramides and diglycerides. This Homo sapiens (Human) protein is 2-hydroxyacylsphingosine 1-beta-galactosyltransferase.